The primary structure comprises 842 residues: Alpha-glucan phosphorylase, H isozyme (842 aa).

Lys688 is modified (N6-(pyridoxal phosphate)lysine).

Belongs to the glycogen phosphorylase family. Pyridoxal 5'-phosphate serves as cofactor.

The protein localises to the cytoplasm. It catalyses the reaction [(1-&gt;4)-alpha-D-glucosyl](n) + phosphate = [(1-&gt;4)-alpha-D-glucosyl](n-1) + alpha-D-glucose 1-phosphate. In terms of biological role, phosphorylase is an important allosteric enzyme in carbohydrate metabolism. Enzymes from different sources differ in their regulatory mechanisms and in their natural substrates. However, all known phosphorylases share catalytic and structural properties. Its function is as follows. The H isoform exhibits higher affinity for branched polyglucans such as soluble starch or glycogen. This chain is Alpha-glucan phosphorylase, H isozyme, found in Vicia faba (Broad bean).